Here is an 815-residue protein sequence, read N- to C-terminus: Bifunctional aspartokinase/homoserine dehydrogenase (815 aa).

Residues 1–249 are aspartokinase; that stretch reads MRVLKFGGTS…VPDARLLPTL (249 aa). An interface region spans residues 250–470; it reads SYREAMELSY…NNKKVVDMFL (221 aa). ACT domains follow at residues 320-392 and 401-478; these read VSGP…PIEV and VVGD…GVGG. A homoserine dehydrogenase region spans residues 471–815; that stretch reads VGVGGVGGEL…FADILRTLQH (345 aa). Val-473, Gly-475, Val-476, Ala-504, and Thr-555 together coordinate NAD(+). Residue Val-476 participates in NADP(+) binding. An NADPH-binding site is contributed by Val-476. An NADP(+)-binding site is contributed by Thr-555. Positions 555, 556, and 579 each coordinate NADPH. Position 579 (Lys-579) interacts with NADP(+). Residues Glu-606, Val-609, Ala-611, and Leu-613 each coordinate Na(+). NADP(+)-binding residues include Gly-664 and Glu-667. L-homoserine-binding residues include Glu-667 and Asp-678. Lys-682 functions as the Proton donor in the catalytic mechanism. Gly-797 is a binding site for NAD(+). An NADP(+)-binding site is contributed by Gly-797. Gly-797 serves as a coordination point for NADPH.

It in the N-terminal section; belongs to the aspartokinase family. In the C-terminal section; belongs to the homoserine dehydrogenase family. In terms of assembly, homotetramer. A metal cation serves as cofactor.

The enzyme catalyses L-homoserine + NADP(+) = L-aspartate 4-semialdehyde + NADPH + H(+). It catalyses the reaction L-homoserine + NAD(+) = L-aspartate 4-semialdehyde + NADH + H(+). It carries out the reaction L-aspartate + ATP = 4-phospho-L-aspartate + ADP. It participates in amino-acid biosynthesis; L-lysine biosynthesis via DAP pathway; (S)-tetrahydrodipicolinate from L-aspartate: step 1/4. It functions in the pathway amino-acid biosynthesis; L-methionine biosynthesis via de novo pathway; L-homoserine from L-aspartate: step 1/3. Its pathway is amino-acid biosynthesis; L-methionine biosynthesis via de novo pathway; L-homoserine from L-aspartate: step 3/3. The protein operates within amino-acid biosynthesis; L-threonine biosynthesis; L-threonine from L-aspartate: step 1/5. It participates in amino-acid biosynthesis; L-threonine biosynthesis; L-threonine from L-aspartate: step 3/5. Functionally, bifunctional aspartate kinase and homoserine dehydrogenase that catalyzes the first and the third steps toward the synthesis of lysine, methionine and threonine from aspartate. In Haemophilus influenzae (strain ATCC 51907 / DSM 11121 / KW20 / Rd), this protein is Bifunctional aspartokinase/homoserine dehydrogenase (thrA).